The primary structure comprises 207 residues: Large ribosomal subunit protein uL4 (207 aa).

The interval 49–78 (HAVKNRSAVSGGGRKPWRQKGTGRARQGSI) is disordered.

The protein belongs to the universal ribosomal protein uL4 family. As to quaternary structure, part of the 50S ribosomal subunit.

One of the primary rRNA binding proteins, this protein initially binds near the 5'-end of the 23S rRNA. It is important during the early stages of 50S assembly. It makes multiple contacts with different domains of the 23S rRNA in the assembled 50S subunit and ribosome. Functionally, forms part of the polypeptide exit tunnel. In Streptococcus uberis (strain ATCC BAA-854 / 0140J), this protein is Large ribosomal subunit protein uL4.